Consider the following 359-residue polypeptide: 3-dehydroshikimate dehydratase (359 aa).

This sequence belongs to the bacterial two-domain DSD family. In terms of assembly, monomer.

It carries out the reaction 3-dehydroshikimate = 3,4-dihydroxybenzoate + H2O. Its pathway is aromatic compound metabolism; 3,4-dihydroxybenzoate biosynthesis; 3,4-dihydroxybenzoate from 3-dehydroquinate: step 2/2. Its activity is regulated as follows. Divalent cations such as Mg(2+), but also MO(2+), Mn(2+), Ba(2+), and Co(2+) activate the enzyme, whereas monovalent cations as K(+), Na(+), and NH4(+) decrease its activity slightly. Its function is as follows. 3-dehydroshikimate dehydratase; part of the qa gene cluster that mediates the catabolism of quinic acid (QA) and as such, allows the use of QA as a sole carbon source. Catalyzes the third reaction in the inducible quinic acid catabolic pathway by converting dehydroshikimate to protocatechuate. The qa cluster encodes 3 inducible enymes (qa-2, qa-3 and qa-4) catalyzing the first three reactions in the catabolism of quinic acid to protocatechuic acid (also known as 3,4-Dihydroxybenzoic acid). In Neurospora crassa (strain ATCC 24698 / 74-OR23-1A / CBS 708.71 / DSM 1257 / FGSC 987), this protein is 3-dehydroshikimate dehydratase.